We begin with the raw amino-acid sequence, 394 residues long: Methionine import ATP-binding protein MetN 2 (394 aa).

The region spanning 39 to 278 (VSLEQVGKVF…PRHGATRALL (240 aa)) is the ABC transporter domain. 75 to 82 (GRSGAGKS) contributes to the ATP binding site.

Belongs to the ABC transporter superfamily. Methionine importer (TC 3.A.1.24) family. In terms of assembly, the complex is composed of two ATP-binding proteins (MetN), two transmembrane proteins (MetI) and a solute-binding protein (MetQ).

Its subcellular location is the cell inner membrane. The enzyme catalyses L-methionine(out) + ATP + H2O = L-methionine(in) + ADP + phosphate + H(+). It catalyses the reaction D-methionine(out) + ATP + H2O = D-methionine(in) + ADP + phosphate + H(+). Its function is as follows. Part of the ABC transporter complex MetNIQ involved in methionine import. Responsible for energy coupling to the transport system. This Burkholderia cenocepacia (strain HI2424) protein is Methionine import ATP-binding protein MetN 2.